Reading from the N-terminus, the 396-residue chain is Sialyltransferase-like protein 2 (396 aa).

Residues 1–6 (MKRRHL) lie on the Cytoplasmic side of the membrane. The chain crosses the membrane as a helical; Signal-anchor for type II membrane protein span at residues 7–23 (PPVLVLLLLSILSLSFR). Topologically, residues 24 to 396 (RRLLVLQGPP…FTVPPVRLHR (373 aa)) are lumenal. N-linked (GlcNAc...) asparagine glycans are attached at residues N72, N260, and N304.

This sequence belongs to the glycosyltransferase 29 family.

It is found in the golgi apparatus membrane. Its function is as follows. Does not possess sialyltransferase-like activity in vitro. The protein is Sialyltransferase-like protein 2 of Oryza sativa subsp. indica (Rice).